The sequence spans 836 residues: Eukaryotic translation initiation factor 3 subunit C (836 aa).

The interval 1–97 is disordered; sequence MSRFFVSGYD…RRVVKSAKEK (97 aa). The segment covering 13–55 has biased composition (acidic residues); that stretch reads SSSEEEDLLTSSEEELMSSEQESDSEFDDEFANDDDSDSSDSD. The span at 86-97 shows a compositional bias: basic and acidic residues; it reads EGRRVVKSAKEK. Residues 586 to 761 enclose the PCI domain; that stretch reads FHMHINLELL…KSINFVSSEH (176 aa). Residues 783–817 form a disordered region; that stretch reads DKNEKTASNGHGRKTTQQQQQQQQKEQREQTHDEN. Over residues 797 to 806 the composition is skewed to low complexity; the sequence is TTQQQQQQQQ. The segment covering 807-817 has biased composition (basic and acidic residues); the sequence is KEQREQTHDEN.

Belongs to the eIF-3 subunit C family. As to quaternary structure, component of the eukaryotic translation initiation factor 3 (eIF-3) complex.

It localises to the cytoplasm. Component of the eukaryotic translation initiation factor 3 (eIF-3) complex, which is involved in protein synthesis of a specialized repertoire of mRNAs and, together with other initiation factors, stimulates binding of mRNA and methionyl-tRNAi to the 40S ribosome. The eIF-3 complex specifically targets and initiates translation of a subset of mRNAs involved in cell proliferation. The chain is Eukaryotic translation initiation factor 3 subunit C from Meyerozyma guilliermondii (strain ATCC 6260 / CBS 566 / DSM 6381 / JCM 1539 / NBRC 10279 / NRRL Y-324) (Yeast).